Here is a 97-residue protein sequence, read N- to C-terminus: U-scoloptoxin(10)-Sa2a (97 aa).

An N-terminal signal peptide occupies residues Met1 to Ala23.

This sequence belongs to the scoloptoxin-10 family. Post-translationally, contains 3 disulfide bonds. Expressed by the venom gland.

The protein localises to the secreted. The chain is U-scoloptoxin(10)-Sa2a from Scolopendra alternans (Florida Keys giant centipede).